The following is a 360-amino-acid chain: Mitogen-activated protein kinase 14 (360 aa).

N-acetylserine is present on Ser2. Ser2 is subject to Phosphoserine. The residue at position 16 (Thr16) is a Phosphothreonine. The Protein kinase domain occupies 24–308 (YQNLSPVGSG…AAQALAHAYF (285 aa)). ATP contacts are provided by residues 30 to 38 (VGSGAYGSV) and Lys53. Residue Lys53 is modified to N6-acetyllysine. Catalysis depends on Asp150, which acts as the Proton acceptor. N6-acetyllysine is present on Lys152. Position 180 is a phosphothreonine (Thr180). A TXY motif is present at residues 180–182 (TGY). Tyr182 carries the phosphotyrosine modification. Phosphotyrosine; by ZAP70 is present on Tyr323.

This sequence belongs to the protein kinase superfamily. CMGC Ser/Thr protein kinase family. MAP kinase subfamily. As to quaternary structure, component of a signaling complex containing at least AKAP13, PKN1, MAPK14, ZAK and MAP2K3. Within this complex, AKAP13 interacts directly with PKN1, which in turn recruits MAPK14, MAP2K3 and ZAK. Binds to a kinase interaction motif within the protein tyrosine phosphatase, PTPRR. This interaction retains MAPK14 in the cytoplasm and prevents nuclear accumulation. Interacts with SPAG9 and GADD45A. Interacts with CDC25B, CDC25C, DUSP1, DUSP10, DUSP16, NP60, SUPT20H and TAB1. Interacts with casein kinase II subunits CSNK2A1 and CSNK2B. Interacts with PPM1D. Interacts with CDK5RAP3; recruits PPM1D to MAPK14 and may regulate its dephosphorylation. Interacts with DUSP2; this interaction does not lead to catalytic activation of DUSP2 and dephosphrylation of MAPK14. Requires Mg(2+) as cofactor. Dually phosphorylated on Thr-180 and Tyr-182 by the MAP2Ks MAP2K3/MKK3, MAP2K4/MKK4 and MAP2K6/MKK6 in response to inflammatory cytokines, environmental stress or growth factors, which activates the enzyme. Dual phosphorylation can also be mediated by TAB1-mediated autophosphorylation. TCR engagement in T-cells also leads to Tyr-323 phosphorylation by ZAP70. Dephosphorylated and inactivated by DUPS1, DUSP10 and DUSP16. PPM1D also mediates dephosphorylation and inactivation of MAPK14. In terms of processing, acetylated at Lys-53 and Lys-152 by KAT2B and EP300. Acetylation at Lys-53 increases the affinity for ATP and enhances kinase activity. Lys-53 and Lys-152 are deacetylated by HDAC3. Post-translationally, ubiquitinated. Ubiquitination leads to degradation by the proteasome pathway.

The protein localises to the cytoplasm. It localises to the nucleus. It catalyses the reaction L-seryl-[protein] + ATP = O-phospho-L-seryl-[protein] + ADP + H(+). It carries out the reaction L-threonyl-[protein] + ATP = O-phospho-L-threonyl-[protein] + ADP + H(+). Activated by cell stresses such as DNA damage, heat shock, osmotic shock, anisomycin and sodium arsenite, as well as pro-inflammatory stimuli such as bacterial lipopolysaccharide (LPS) and interleukin-1. Activation occurs through dual phosphorylation of Thr-180 and Tyr-182 by either of two dual specificity kinases, MAP2K3/MKK3 or MAP2K6/MKK6, and potentially also MAP2K4/MKK4, as well as by TAB1-mediated autophosphorylation. MAPK14 phosphorylated on both Thr-180 and Tyr-182 is 10-20-fold more active than MAPK14 phosphorylated only on Thr-180, whereas MAPK14 phosphorylated on Tyr-182 alone is inactive. whereas Thr-180 is necessary for catalysis, Tyr-182 may be required for auto-activation and substrate recognition. Phosphorylated at Tyr-323 by ZAP70 in an alternative activation pathway in response to TCR signaling in T-cells. This alternative pathway is inhibited by GADD45A. Inhibited by dual specificity phosphatases, such as DUSP1, DUSP10, and DUSP16. Specifically inhibited by the binding of pyridinyl-imidazole compounds, which are cytokine-suppressive anti-inflammatory drugs (CSAID). SB203580 is an inhibitor of MAPK14. Serine/threonine kinase which acts as an essential component of the MAP kinase signal transduction pathway. MAPK14 is one of the four p38 MAPKs which play an important role in the cascades of cellular responses evoked by extracellular stimuli such as pro-inflammatory cytokines or physical stress leading to direct activation of transcription factors. Accordingly, p38 MAPKs phosphorylate a broad range of proteins and it has been estimated that they may have approximately 200 to 300 substrates each. Some of the targets are downstream kinases which are activated through phosphorylation and further phosphorylate additional targets. RPS6KA5/MSK1 and RPS6KA4/MSK2 can directly phosphorylate and activate transcription factors such as CREB1, ATF1, the NF-kappa-B isoform RELA/NFKB3, STAT1 and STAT3, but can also phosphorylate histone H3 and the nucleosomal protein HMGN1. RPS6KA5/MSK1 and RPS6KA4/MSK2 play important roles in the rapid induction of immediate-early genes in response to stress or mitogenic stimuli, either by inducing chromatin remodeling or by recruiting the transcription machinery. On the other hand, two other kinase targets, MAPKAPK2/MK2 and MAPKAPK3/MK3, participate in the control of gene expression mostly at the post-transcriptional level, by phosphorylating ZFP36 (tristetraprolin) and ELAVL1, and by regulating EEF2K, which is important for the elongation of mRNA during translation. MKNK1/MNK1 and MKNK2/MNK2, two other kinases activated by p38 MAPKs, regulate protein synthesis by phosphorylating the initiation factor EIF4E2. MAPK14 also interacts with casein kinase II, leading to its activation through autophosphorylation and further phosphorylation of TP53/p53. In the cytoplasm, the p38 MAPK pathway is an important regulator of protein turnover. For example, CFLAR is an inhibitor of TNF-induced apoptosis whose proteasome-mediated degradation is regulated by p38 MAPK phosphorylation. In a similar way, MAPK14 phosphorylates the ubiquitin ligase SIAH2, regulating its activity towards EGLN3. MAPK14 may also inhibit the lysosomal degradation pathway of autophagy by interfering with the intracellular trafficking of the transmembrane protein ATG9. Another function of MAPK14 is to regulate the endocytosis of membrane receptors by different mechanisms that impinge on the small GTPase RAB5A. In addition, clathrin-mediated EGFR internalization induced by inflammatory cytokines and UV irradiation depends on MAPK14-mediated phosphorylation of EGFR itself as well as of RAB5A effectors. Ectodomain shedding of transmembrane proteins is regulated by p38 MAPKs as well. In response to inflammatory stimuli, p38 MAPKs phosphorylate the membrane-associated metalloprotease ADAM17. Such phosphorylation is required for ADAM17-mediated ectodomain shedding of TGF-alpha family ligands, which results in the activation of EGFR signaling and cell proliferation. Another p38 MAPK substrate is FGFR1. FGFR1 can be translocated from the extracellular space into the cytosol and nucleus of target cells, and regulates processes such as rRNA synthesis and cell growth. FGFR1 translocation requires p38 MAPK activation. In the nucleus, many transcription factors are phosphorylated and activated by p38 MAPKs in response to different stimuli. Classical examples include ATF1, ATF2, ATF6, ELK1, PTPRH, DDIT3, TP53/p53 and MEF2C and MEF2A. The p38 MAPKs are emerging as important modulators of gene expression by regulating chromatin modifiers and remodelers. The promoters of several genes involved in the inflammatory response, such as IL6, IL8 and IL12B, display a p38 MAPK-dependent enrichment of histone H3 phosphorylation on 'Ser-10' (H3S10ph) in LPS-stimulated myeloid cells. This phosphorylation enhances the accessibility of the cryptic NF-kappa-B-binding sites marking promoters for increased NF-kappa-B recruitment. Phosphorylates CDC25B and CDC25C which is required for binding to 14-3-3 proteins and leads to initiation of a G2 delay after ultraviolet radiation. Phosphorylates TIAR following DNA damage, releasing TIAR from GADD45A mRNA and preventing mRNA degradation. The p38 MAPKs may also have kinase-independent roles, which are thought to be due to the binding to targets in the absence of phosphorylation. Protein O-Glc-N-acylation catalyzed by the OGT is regulated by MAPK14, and, although OGT does not seem to be phosphorylated by MAPK14, their interaction increases upon MAPK14 activation induced by glucose deprivation. This interaction may regulate OGT activity by recruiting it to specific targets such as neurofilament H, stimulating its O-Glc-N-acylation. Required in mid-fetal development for the growth of embryo-derived blood vessels in the labyrinth layer of the placenta. Also plays an essential role in developmental and stress-induced erythropoiesis, through regulation of EPO gene expression. Phosphorylates S100A9 at 'Thr-113'. The chain is Mitogen-activated protein kinase 14 from Rattus norvegicus (Rat).